A 213-amino-acid polypeptide reads, in one-letter code: Probable 26S proteasome regulatory subunit p27 (213 aa).

Positions 1–82 (MDEFKQLDLK…IKKVLEKVFS (82 aa)) form a coiled coil. One can recognise a PDZ domain in the interval 120–184 (SKILGRVKPF…TLDVLLIRGY (65 aa)).

The protein resides in the cytoplasm. It localises to the nucleus. Its function is as follows. Acts as a chaperone during the assembly of the 26S proteasome, specifically of the base subcomplex of the 19S regulatory complex (RC). The chain is Probable 26S proteasome regulatory subunit p27 (nas2) from Schizosaccharomyces pombe (strain 972 / ATCC 24843) (Fission yeast).